The primary structure comprises 379 residues: Inactive deoxyhypusine synthase (379 aa).

A disordered region spans residues 1-48 (MLASVPAPRPAKKDSAASRRKSASKSTGAAVKDGSSARVSASGAAESP). The span at 36–47 (SARVSASGAAES) shows a compositional bias: low complexity. Residues 115-119 (SNMIS), 141-143 (SAG), E147, and D256 contribute to the NAD(+) site. 146–147 (EE) serves as a coordination point for spermidine. Position 261 (D261) interacts with spermidine. G302 contacts NAD(+). H307 is a binding site for spermidine. Position 323–324 (323–324 (TG)) interacts with NAD(+). Residues 329–331 (GCV) and 338–344 (DDVACGL) each bind spermidine. NAD(+) is bound at residue 357-358 (DA).

Belongs to the deoxyhypusine synthase family.

In Leishmania donovani, this protein is Inactive deoxyhypusine synthase.